We begin with the raw amino-acid sequence, 475 residues long: Ankyrin repeat, SAM and basic leucine zipper domain-containing protein 1 (475 aa).

Ser17, Ser18, and Ser20 each carry phosphoserine. ANK repeat units lie at residues 45-74 (EKNE…SVDT), 78-107 (YGWT…NASF), 110-144 (DKQT…DPNM), 148-177 (RLMT…DVNA), 181-210 (NGYT…NKMI), and 214-243 (DGKT…PLEG). Residues 272–334 (SYTAFGDLEI…KILAALKELE (63 aa)) form the SAM domain.

Interacts with DDX4, PIWIL1, RANBP9 and TDRD1.

It is found in the cytoplasm. In terms of biological role, plays a central role during spermatogenesis by repressing transposable elements and preventing their mobilization, which is essential for the germline integrity. Acts via the piRNA metabolic process, which mediates the repression of transposable elements during meiosis by forming complexes composed of piRNAs and Piwi proteins and governs the methylation and subsequent repression of transposons. Its association with pi-bodies suggests a participation in the primary piRNAs metabolic process. Required prior to the pachytene stage to facilitate the production of multiple types of piRNAs, including those associated with repeats involved in the regulation of retrotransposons. May act by mediating protein-protein interactions during germ cell maturation. This Atelerix albiventris (Middle-African hedgehog) protein is Ankyrin repeat, SAM and basic leucine zipper domain-containing protein 1 (ASZ1).